Consider the following 313-residue polypeptide: UbiA prenyltransferase claS (313 aa).

2 helical membrane-spanning segments follow: residues 30–52 and 57–79; these read FAGT…RALL and TFGT…GCIW. Residues 81 to 88 carry the NDxxDxxxD motif; sequence DILDQDFD. Mg(2+) contacts are provided by Asp-84 and Asp-88. 3 consecutive transmembrane segments (helical) span residues 99 to 121, 131 to 148, and 155 to 177; these read IASG…FILM, AWMI…IYPL, and WPQA…YTTG. Positions 205 and 209 each coordinate Mg(2+). Residues 205–209 carry the DxxxD motif; that stretch reads DKKDD. A YxxxK motif is present at residues 205–209; it reads DKKDD. A run of 3 helical transmembrane segments spans residues 227–247, 250–270, and 293–313; these read PVLS…GILN, ELPY…TQLW, and AIVW…GAIM.

It belongs to the UbiA prenyltransferase family. Mg(2+) serves as cofactor.

It localises to the membrane. It catalyses the reaction hydroquinone + (2E)-geranyl diphosphate = (2E)-geranylhydroquinone + diphosphate. Its pathway is secondary metabolite biosynthesis; terpenoid biosynthesis. Prenyltransferase; part of the gene cluster that mediates the biosynthesis of clavilactone A, a meroterpenoid that features a unique benzo-fused ten-membered carbocyclic ring unit with an alpha,beta-epoxy-gamma-lactone moiety, forming an intriguing 10/5/3 tricyclic nested skeleton. ClaR, ClaS and ClaT are sufficient to produce clavilactone A. Within the pathway, claS acts as an atypical UbiA prenyltransferase that transfers geranyl pyrophosphate (GPP) to hydroquinone (HYQ) instead of p-hydroxybenzoic acid (PHB), producing the first intermediate geranylhydroquinone. The cytochrome P450 monooxygenase claR then catalyzes the diradical coupling reaction between the intramolecular hydroquinone and allyl moieties to form the benzo-fused ten-membered carbocyclic ring unit of wigantol. Finally the cytochrome P450 monooxygenase claT exquisitely and stereoselectively assembles the alpha,beta-epoxy-gamma-lactone moiety, producing clavilactone A via arnebinol A. This Ampulloclitocybe clavipes (Club foot) protein is UbiA prenyltransferase claS.